A 176-amino-acid chain; its full sequence is Cathelicidin-2 (176 aa).

A signal peptide spans 1–29 (METQGASLSLGRWSLWLLLLGLVVPLASA). Gln-30 bears the Pyrrolidone carboxylic acid mark. A propeptide spanning residues 30-130 (QALSYREAVL…DINCNELQSV (101 aa)) is cleaved from the precursor. Cystine bridges form between Cys-85/Cys-96 and Cys-107/Cys-124. The interval 135-176 (PIRRPPIRPPFNPPFRPPVRPPFRPPFRPPFRPPIGPFPGRR) is disordered. Over residues 141-176 (IRPPFNPPFRPPVRPPFRPPFRPPFRPPIGPFPGRR) the composition is skewed to pro residues. Proline amide is present on Pro-173. The propeptide at 174-176 (GRR) is removed in mature form.

It belongs to the cathelicidin family. Post-translationally, elastase is responsible for its maturation.

It localises to the secreted. Functionally, binds to the lipid A moiety of bacterial lipopolysaccharides (LPS), a glycolipid present in the outer membrane of all Gram-negative bacteria. Shows a potent antimicrobial activity against the Gram-negative bacteria E.coli, S.typhimurium and P.aeruginosa. Less active against the Gram-positive bacteria S.aureus, L.monocytogenes and B.subtilis. The chain is Cathelicidin-2 (CATHL2) from Capra hircus (Goat).